Consider the following 629-residue polypeptide: tRNA uridine 5-carboxymethylaminomethyl modification enzyme MnmG (629 aa).

FAD-binding positions include 13-18 (GGGHAG), Val-125, and Ser-180. An NAD(+)-binding site is contributed by 273 to 287 (GPRYCPSIEDKVMRF). Gln-370 contacts FAD.

The protein belongs to the MnmG family. In terms of assembly, homodimer. Heterotetramer of two MnmE and two MnmG subunits. Requires FAD as cofactor.

Its subcellular location is the cytoplasm. Functionally, NAD-binding protein involved in the addition of a carboxymethylaminomethyl (cmnm) group at the wobble position (U34) of certain tRNAs, forming tRNA-cmnm(5)s(2)U34. This Citrobacter koseri (strain ATCC BAA-895 / CDC 4225-83 / SGSC4696) protein is tRNA uridine 5-carboxymethylaminomethyl modification enzyme MnmG.